Consider the following 309-residue polypeptide: Homoserine O-acetyltransferase (309 aa).

Cysteine 142 acts as the Acyl-thioester intermediate in catalysis. Residues lysine 163 and serine 192 each contribute to the substrate site. Residue histidine 235 is the Proton acceptor of the active site. The active site involves glutamate 237. Residue arginine 249 participates in substrate binding.

It belongs to the MetA family.

It is found in the cytoplasm. The catalysed reaction is L-homoserine + acetyl-CoA = O-acetyl-L-homoserine + CoA. Its pathway is amino-acid biosynthesis; L-methionine biosynthesis via de novo pathway; O-acetyl-L-homoserine from L-homoserine: step 1/1. Functionally, transfers an acetyl group from acetyl-CoA to L-homoserine, forming acetyl-L-homoserine. The chain is Homoserine O-acetyltransferase from Methanomethylophilus alvi (strain Mx1201).